Reading from the N-terminus, the 218-residue chain is MPAINAKRVYRIMRQNALLLERKPAVPPSKRAHTGRVAVKESNQRWCSDGFEFCCDNGERLRVTFALDCCDREALHWAVTTGGFNSETVQDVMLGAVERRFGNDLPSSPVEWLTDNGSCYRANETRQFARMLGLEPKNTAVRSPESNGIAESFVKTIKRDYISIMPKPDGLTAAKNLAEAFEHYNEWHPHSALGYRSPREYLRQRACNGLSDNRCLEI.

The region spanning 23 to 206 (KPAVPPSKRA…SPREYLRQRA (184 aa)) is the Integrase catalytic domain.

In terms of biological role, involved in the transposition of the insertion sequence IS2. The sequence is that of Putative transposase InsD for insertion element IS2E (insD8) from Escherichia coli (strain K12).